A 159-amino-acid polypeptide reads, in one-letter code: MPKRETKKIKPSQEVIKEGPFLVAIHLKGIYMSNYTNSPCAACKFLRRKCTSDCVFAPYFPPEEPTKFANVHRIFGASNVSKILHEVAPHQREDAVNSLAYEAEARLKDPVYGCVGAISVLQRQVLRLQRELEETNADLMRYAGCLGGETTSAYGGRRG.

Residues serine 38–leucine 139 enclose the LOB domain.

The protein belongs to the LOB domain-containing protein family. In terms of tissue distribution, expressed in young shoots, roots, stems, leaves and flowers.

The chain is LOB domain-containing protein 25 (LBD25) from Arabidopsis thaliana (Mouse-ear cress).